Reading from the N-terminus, the 227-residue chain is Cytochrome c oxidase subunit 2 (227 aa).

Residues 1–14 (MAYPLQLGLQDASS) are Mitochondrial intermembrane-facing. A helical membrane pass occupies residues 15–45 (PIMEELMNFHDHTLMIVFLISSLVLYLISLM). The Mitochondrial matrix portion of the chain corresponds to 46–59 (LTTKLIHTSTMDAQ). The chain crosses the membrane as a helical span at residues 60 to 87 (EVETVWTILPAIILILIALPSLRILYMM). Residues 88-227 (DEINNPVLTV…LFENWSLSLT (140 aa)) are Mitochondrial intermembrane-facing. 6 residues coordinate Cu cation: H161, C196, E198, C200, H204, and M207. E198 contacts Mg(2+).

Belongs to the cytochrome c oxidase subunit 2 family. Component of the cytochrome c oxidase (complex IV, CIV), a multisubunit enzyme composed of 14 subunits. The complex is composed of a catalytic core of 3 subunits MT-CO1, MT-CO2 and MT-CO3, encoded in the mitochondrial DNA, and 11 supernumerary subunits COX4I, COX5A, COX5B, COX6A, COX6B, COX6C, COX7A, COX7B, COX7C, COX8 and NDUFA4, which are encoded in the nuclear genome. The complex exists as a monomer or a dimer and forms supercomplexes (SCs) in the inner mitochondrial membrane with NADH-ubiquinone oxidoreductase (complex I, CI) and ubiquinol-cytochrome c oxidoreductase (cytochrome b-c1 complex, complex III, CIII), resulting in different assemblies (supercomplex SCI(1)III(2)IV(1) and megacomplex MCI(2)III(2)IV(2)). Found in a complex with TMEM177, COA6, COX18, COX20, SCO1 and SCO2. Interacts with TMEM177 in a COX20-dependent manner. Interacts with COX20. Interacts with COX16. Requires Cu cation as cofactor.

The protein localises to the mitochondrion inner membrane. The catalysed reaction is 4 Fe(II)-[cytochrome c] + O2 + 8 H(+)(in) = 4 Fe(III)-[cytochrome c] + 2 H2O + 4 H(+)(out). Its function is as follows. Component of the cytochrome c oxidase, the last enzyme in the mitochondrial electron transport chain which drives oxidative phosphorylation. The respiratory chain contains 3 multisubunit complexes succinate dehydrogenase (complex II, CII), ubiquinol-cytochrome c oxidoreductase (cytochrome b-c1 complex, complex III, CIII) and cytochrome c oxidase (complex IV, CIV), that cooperate to transfer electrons derived from NADH and succinate to molecular oxygen, creating an electrochemical gradient over the inner membrane that drives transmembrane transport and the ATP synthase. Cytochrome c oxidase is the component of the respiratory chain that catalyzes the reduction of oxygen to water. Electrons originating from reduced cytochrome c in the intermembrane space (IMS) are transferred via the dinuclear copper A center (CU(A)) of subunit 2 and heme A of subunit 1 to the active site in subunit 1, a binuclear center (BNC) formed by heme A3 and copper B (CU(B)). The BNC reduces molecular oxygen to 2 water molecules using 4 electrons from cytochrome c in the IMS and 4 protons from the mitochondrial matrix. In Taterillus emini (Emin's gerbil), this protein is Cytochrome c oxidase subunit 2 (MT-CO2).